A 165-amino-acid polypeptide reads, in one-letter code: Small ribosomal subunit protein uS5 (165 aa).

The 64-residue stretch at 10 to 73 folds into the S5 DRBM domain; it reads QIEKLISLNR…TSARKNLRFV (64 aa).

Belongs to the universal ribosomal protein uS5 family. In terms of assembly, part of the 30S ribosomal subunit. Contacts proteins S4 and S8.

Functionally, with S4 and S12 plays an important role in translational accuracy. Its function is as follows. Located at the back of the 30S subunit body where it stabilizes the conformation of the head with respect to the body. In Borreliella afzelii (strain PKo) (Borrelia afzelii), this protein is Small ribosomal subunit protein uS5.